A 185-amino-acid chain; its full sequence is Elongation factor P (185 aa).

The protein belongs to the elongation factor P family.

The protein localises to the cytoplasm. It functions in the pathway protein biosynthesis; polypeptide chain elongation. Involved in peptide bond synthesis. Stimulates efficient translation and peptide-bond synthesis on native or reconstituted 70S ribosomes in vitro. Probably functions indirectly by altering the affinity of the ribosome for aminoacyl-tRNA, thus increasing their reactivity as acceptors for peptidyl transferase. The sequence is that of Elongation factor P from Lachnoclostridium phytofermentans (strain ATCC 700394 / DSM 18823 / ISDg) (Clostridium phytofermentans).